The primary structure comprises 360 residues: DNA replication and repair protein RecF (360 aa).

30–37 contributes to the ATP binding site; it reads GQNGSGKT.

The protein belongs to the RecF family.

It localises to the cytoplasm. The RecF protein is involved in DNA metabolism; it is required for DNA replication and normal SOS inducibility. RecF binds preferentially to single-stranded, linear DNA. It also seems to bind ATP. This Shewanella sp. (strain MR-7) protein is DNA replication and repair protein RecF.